The chain runs to 144 residues: MRLNELAPEPGSRPSAKRVGRGIGSGLGKTGGRGHKGLKSRSGGSVAPGFEGGQQPLARRLPKFGFTSRQQRYVAEIRLNELAKVEGDVVDLAALKKADIIREEIREAKVILSGELDRAVTVKGLRVTKGAREAITAAGGKVED.

Positions 1 to 58 (MRLNELAPEPGSRPSAKRVGRGIGSGLGKTGGRGHKGLKSRSGGSVAPGFEGGQQPLA) are disordered. A compositionally biased stretch (gly residues) spans 21-31 (RGIGSGLGKTG).

This sequence belongs to the universal ribosomal protein uL15 family. As to quaternary structure, part of the 50S ribosomal subunit.

In terms of biological role, binds to the 23S rRNA. In Marinobacter nauticus (strain ATCC 700491 / DSM 11845 / VT8) (Marinobacter aquaeolei), this protein is Large ribosomal subunit protein uL15.